The chain runs to 338 residues: Lipoate-protein ligase A (338 aa).

In terms of domain architecture, BPL/LPL catalytic spans 29 to 216 (PATQRVLFLW…AFFAHYGERV (188 aa)). Residues arginine 71, 76-79 (GAVF), and lysine 134 each bind ATP. Residue lysine 134 coordinates (R)-lipoate.

The protein belongs to the LplA family. As to quaternary structure, monomer.

The protein resides in the cytoplasm. The enzyme catalyses L-lysyl-[lipoyl-carrier protein] + (R)-lipoate + ATP = N(6)-[(R)-lipoyl]-L-lysyl-[lipoyl-carrier protein] + AMP + diphosphate + H(+). It functions in the pathway protein modification; protein lipoylation via exogenous pathway; protein N(6)-(lipoyl)lysine from lipoate: step 1/2. It participates in protein modification; protein lipoylation via exogenous pathway; protein N(6)-(lipoyl)lysine from lipoate: step 2/2. In terms of biological role, catalyzes both the ATP-dependent activation of exogenously supplied lipoate to lipoyl-AMP and the transfer of the activated lipoyl onto the lipoyl domains of lipoate-dependent enzymes. The polypeptide is Lipoate-protein ligase A (Escherichia coli O157:H7).